A 657-amino-acid polypeptide reads, in one-letter code: Glycogen debranching enzyme (657 aa).

Asp336 functions as the Nucleophile in the catalytic mechanism. Catalysis depends on Glu371, which acts as the Proton donor. The disordered stretch occupies residues 460–479 (ANGEENRDGTNNNHSFNHGI).

The protein belongs to the glycosyl hydrolase 13 family.

It carries out the reaction Hydrolysis of (1-&gt;6)-alpha-D-glucosidic linkages to branches with degrees of polymerization of three or four glucose residues in limit dextrin.. It participates in glycan degradation; glycogen degradation. Its function is as follows. Removes maltotriose and maltotetraose chains that are attached by 1,6-alpha-linkage to the limit dextrin main chain, generating a debranched limit dextrin. In Enterobacter sp. (strain 638), this protein is Glycogen debranching enzyme.